The following is a 443-amino-acid chain: Endothelin receptor type B (443 aa).

Residues 1-26 (MQPLPTLCGRVLVALILACGVAGVQG) form the signal peptide. At 27–102 (EERRFPPARA…RTIEIKETFK (76 aa)) the chain is on the extracellular side. A compositionally biased stretch (polar residues) spans 51–62 (TKTSWPTGSNAS). Positions 51 to 89 (TKTSWPTGSNASVPRLSAPPQMPKAGRTAGAQRRTLPPP) are disordered. Asn-60 carries N-linked (GlcNAc...) asparagine glycosylation. A helical membrane pass occupies residues 103 to 127 (YINTVVSCLVFVLGIIGNSTLLRII). The Cytoplasmic portion of the chain corresponds to 128-138 (YKNKCMRNGPN). The helical transmembrane segment at 139–164 (ILIASLALGDLLHIIIDIPINVYKLL) threads the bilayer. Residues 165 to 176 (AEDWPFGVEMCK) are Extracellular-facing. Cys-175 and Cys-256 form a disulfide bridge. A helical membrane pass occupies residues 177–198 (LVPFIQKASVGITVLSLCALSI). Over 199–219 (DRYRAVASWSRIKGIGVPKWT) the chain is Cytoplasmic. A helical membrane pass occupies residues 220–244 (AVEIVLIWVVSVVLAVPEAVGFDMI). Residues 245–272 (TADYKGSYLRICLLHPTQKTAFMQFYKN) are Extracellular-facing. The chain crosses the membrane as a helical span at residues 273 to 297 (AKDWWLFSFYFCLPLAITAFFYTLE). Residues 298–325 (TCEMLRKKSGMQIALNDHLKQRREVAKT) lie on the Cytoplasmic side of the membrane. Ser-306 carries the post-translational modification Phosphoserine. A helical membrane pass occupies residues 326-351 (VFCLVLVFALCWLPLHLSRILKHTLY). The Extracellular portion of the chain corresponds to 352 to 363 (DQNDPHRCELLS). A helical membrane pass occupies residues 364–390 (FLLVLEYIGINMASLNSCINPIALYLV). Residues 391 to 443 (SKRFKNCFKWCLCCWCQSFEEKQSLEDKQSCLKFKANDHGYDNFRSSNKYSSS) are Cytoplasmic-facing. 3 S-palmitoyl cysteine lipidation sites follow: Cys-403, Cys-404, and Cys-406. Residue Ser-420 is modified to Phosphoserine. Tyr-440 carries the phosphotyrosine modification. Phosphoserine occurs at positions 441, 442, and 443.

It belongs to the G-protein coupled receptor 1 family. Endothelin receptor subfamily. EDNRB sub-subfamily.

It is found in the cell membrane. Its function is as follows. Non-specific receptor for endothelin 1, 2, and 3. Mediates its action by association with G proteins that activate a phosphatidylinositol-calcium second messenger system. The sequence is that of Endothelin receptor type B (EDNRB) from Equus caballus (Horse).